Consider the following 331-residue polypeptide: Cathepsin S (331 aa).

Residues 1 to 16 (MKRLVCVLLVCSSAVA) form the signal peptide. Positions 17 to 114 (QLHKDPTLDH…ITYKSNPNRI (98 aa)) are cleaved as a propeptide — activation peptide. Asn104 is a glycosylation site (N-linked (GlcNAc...) asparagine). 4 cysteine pairs are disulfide-bonded: Cys126–Cys224, Cys136–Cys180, Cys170–Cys213, and Cys272–Cys320. Cys139 is an active-site residue. Active-site residues include His278 and Asn298.

The protein belongs to the peptidase C1 family. As to quaternary structure, monomer.

The protein resides in the lysosome. Its subcellular location is the secreted. It is found in the cytoplasmic vesicle. The protein localises to the phagosome. It catalyses the reaction Similar to cathepsin L, but with much less activity on Z-Phe-Arg-|-NHMec, and more activity on the Z-Val-Val-Arg-|-Xaa compound.. Functionally, thiol protease. Key protease responsible for the removal of the invariant chain from MHC class II molecules and MHC class II antigen presentation. The bond-specificity of this proteinase is in part similar to the specificities of cathepsin L. The sequence is that of Cathepsin S (CTSS) from Homo sapiens (Human).